The sequence spans 466 residues: 3-isopropylmalate dehydratase large subunit (466 aa).

The [4Fe-4S] cluster site is built by cysteine 347, cysteine 407, and cysteine 410.

It belongs to the aconitase/IPM isomerase family. LeuC type 1 subfamily. Heterodimer of LeuC and LeuD. [4Fe-4S] cluster serves as cofactor.

The catalysed reaction is (2R,3S)-3-isopropylmalate = (2S)-2-isopropylmalate. Its pathway is amino-acid biosynthesis; L-leucine biosynthesis; L-leucine from 3-methyl-2-oxobutanoate: step 2/4. Catalyzes the isomerization between 2-isopropylmalate and 3-isopropylmalate, via the formation of 2-isopropylmaleate. The chain is 3-isopropylmalate dehydratase large subunit from Pectobacterium atrosepticum (strain SCRI 1043 / ATCC BAA-672) (Erwinia carotovora subsp. atroseptica).